The primary structure comprises 592 residues: Frizzled-9 (592 aa).

The signal sequence occupies residues 1–23 (MAVPPLLRGALLLWQLLATGGAA). The Extracellular segment spans residues 24-230 (LEIGRFDPER…EVFWSRRDKD (207 aa)). One can recognise an FZ domain in the interval 35-156 (RGPAPCQAME…NDPHALCMEA (122 aa)). 5 disulfide bridges follow: cysteine 40-cysteine 101, cysteine 48-cysteine 94, cysteine 85-cysteine 123, cysteine 112-cysteine 153, and cysteine 116-cysteine 140. The required for Wnt-activated receptor activity stretch occupies residues 59–173 (PNLLGHTSQG…PTEPHKGLGM (115 aa)). The chain crosses the membrane as a helical span at residues 231 to 251 (FALVWMAVWSALCFFSTAFTV). At 252–267 (FTFLLEPHRFQYPERP) the chain is on the cytoplasmic side. Residues 268–288 (IIFLSMCYNVYSLAFLIRAVA) form a helical membrane-spanning segment. At 289-314 (GAQSVACDQEAGALYVIQEGLENTGC) the chain is on the extracellular side. A helical transmembrane segment spans residues 315-335 (TLVFLLLYYFGMASSLWWVVL). Topologically, residues 336–356 (TLTWFLAAGKKWGHEAIEAHG) are cytoplasmic. The helical transmembrane segment at 357–377 (SYFHMAAWGLPALKTIVVLTL) threads the bilayer. At 378-401 (RKVAGDELTGLCYVASMDPAALTG) the chain is on the extracellular side. A helical transmembrane segment spans residues 402-422 (FVLVPLSCYLVLGTSFLLTGF). At 423–448 (VALFHIRKIMKTGGTNTEKLEKLMVK) the chain is on the cytoplasmic side. Residues 449 to 469 (IGVFSILYTVPATCVIVCYVY) traverse the membrane as a helical segment. Over 470–509 (ERLNMDFWRLRATEQPCTAAAVPGGRRDCSLPGGSVPTVA) the chain is Extracellular. A helical transmembrane segment spans residues 510–530 (VFMLKIFMSLVVGITSGVWVW). Over 531–592 (SSKTFQTWQS…DPSLENPTHL (62 aa)) the chain is Cytoplasmic. Positions 533 to 538 (KTFQTW) match the Lys-Thr-X-X-X-Trp motif, mediates interaction with the PDZ domain of Dvl family members motif. Residues 555 to 592 (ACRTPGGYGRGTHCHYKAPTVVLHMTKTDPSLENPTHL) form a required for CTNNB1 accumulation and TCF transcription factor activity region.

Belongs to the G-protein coupled receptor Fz/Smo family. Post-translationally, ubiquitinated by ZNRF3, leading to its degradation by the proteasome.

The protein localises to the cell membrane. Functionally, receptor for WNT2 that is coupled to the beta-catenin canonical signaling pathway, which leads to the activation of disheveled proteins, inhibition of GSK-3 kinase, nuclear accumulation of beta-catenin and activation of Wnt target genes. Plays a role in neuromuscular junction (NMJ) assembly by negatively regulating the clustering of acetylcholine receptors (AChR) through the beta-catenin canonical signaling pathway. May play a role in neural progenitor cells (NPCs) viability through the beta-catenin canonical signaling pathway by negatively regulating cell cycle arrest leading to inhibition of neuron apoptotic process. During hippocampal development, regulates neuroblast proliferation and apoptotic cell death. Controls bone formation through non canonical Wnt signaling mediated via ISG15. Positively regulates bone regeneration through non canonical Wnt signaling. The protein is Frizzled-9 of Rattus norvegicus (Rat).